A 215-amino-acid chain; its full sequence is Probable transaldolase (215 aa).

Lys-83 acts as the Schiff-base intermediate with substrate in catalysis.

Belongs to the transaldolase family. Type 3B subfamily.

It localises to the cytoplasm. The catalysed reaction is D-sedoheptulose 7-phosphate + D-glyceraldehyde 3-phosphate = D-erythrose 4-phosphate + beta-D-fructose 6-phosphate. It functions in the pathway carbohydrate degradation; pentose phosphate pathway; D-glyceraldehyde 3-phosphate and beta-D-fructose 6-phosphate from D-ribose 5-phosphate and D-xylulose 5-phosphate (non-oxidative stage): step 2/3. In terms of biological role, transaldolase is important for the balance of metabolites in the pentose-phosphate pathway. The protein is Probable transaldolase of Methanococcus maripaludis (strain C5 / ATCC BAA-1333).